The chain runs to 118 residues: Large ribosomal subunit protein mL53 (118 aa).

The segment at 99 to 118 is disordered; it reads AAAASAPGADKVAPGTSTRR.

It belongs to the mitochondrion-specific ribosomal protein mL53 family. In terms of assembly, component of the mitochondrial ribosome large subunit (39S) which comprises a 16S rRNA and about 50 distinct proteins.

Its subcellular location is the mitochondrion. In Mus musculus (Mouse), this protein is Large ribosomal subunit protein mL53 (Mrpl53).